Consider the following 598-residue polypeptide: uncharacterized protein (598 aa).

This is an uncharacterized protein from Homo sapiens (Human).